A 304-amino-acid chain; its full sequence is Acetyl-coenzyme A carboxylase carboxyl transferase subunit beta (304 aa).

The CoA carboxyltransferase N-terminal domain maps to 23-292; that stretch reads VWTKCDSCGQ…PNPEAPREGV (270 aa). Zn(2+)-binding residues include Cys-27, Cys-30, Cys-46, and Cys-49. The C4-type zinc-finger motif lies at 27–49; the sequence is CDSCGQVLYRAELERNLEVCPKC. Residues 285-304 form a disordered region; it reads PEAPREGVVVPPVPDQEPEA. Residues 295-304 show a composition bias toward pro residues; the sequence is PPVPDQEPEA.

This sequence belongs to the AccD/PCCB family. In terms of assembly, acetyl-CoA carboxylase is a heterohexamer composed of biotin carboxyl carrier protein (AccB), biotin carboxylase (AccC) and two subunits each of ACCase subunit alpha (AccA) and ACCase subunit beta (AccD). The cofactor is Zn(2+).

The protein resides in the cytoplasm. The enzyme catalyses N(6)-carboxybiotinyl-L-lysyl-[protein] + acetyl-CoA = N(6)-biotinyl-L-lysyl-[protein] + malonyl-CoA. It participates in lipid metabolism; malonyl-CoA biosynthesis; malonyl-CoA from acetyl-CoA: step 1/1. In terms of biological role, component of the acetyl coenzyme A carboxylase (ACC) complex. Biotin carboxylase (BC) catalyzes the carboxylation of biotin on its carrier protein (BCCP) and then the CO(2) group is transferred by the transcarboxylase to acetyl-CoA to form malonyl-CoA. This Shigella sonnei (strain Ss046) protein is Acetyl-coenzyme A carboxylase carboxyl transferase subunit beta.